Here is a 142-residue protein sequence, read N- to C-terminus: Large ribosomal subunit protein uL11 (142 aa).

Belongs to the universal ribosomal protein uL11 family. In terms of assembly, part of the ribosomal stalk of the 50S ribosomal subunit. Interacts with L10 and the large rRNA to form the base of the stalk. L10 forms an elongated spine to which L12 dimers bind in a sequential fashion forming a multimeric L10(L12)X complex. One or more lysine residues are methylated.

Forms part of the ribosomal stalk which helps the ribosome interact with GTP-bound translation factors. In Mycobacterium ulcerans (strain Agy99), this protein is Large ribosomal subunit protein uL11.